A 299-amino-acid chain; its full sequence is Ribosomal protein L11 methyltransferase (299 aa).

S-adenosyl-L-methionine contacts are provided by T152, G172, D194, and N234.

It belongs to the methyltransferase superfamily. PrmA family.

It localises to the cytoplasm. It carries out the reaction L-lysyl-[protein] + 3 S-adenosyl-L-methionine = N(6),N(6),N(6)-trimethyl-L-lysyl-[protein] + 3 S-adenosyl-L-homocysteine + 3 H(+). Its function is as follows. Methylates ribosomal protein L11. This Geobacter metallireducens (strain ATCC 53774 / DSM 7210 / GS-15) protein is Ribosomal protein L11 methyltransferase.